We begin with the raw amino-acid sequence, 1104 residues long: Extended synaptotagmin-1 (1104 aa).

The residue at position 1 (methionine 1) is an N-acetylmethionine. Residues methionine 1 to serine 38 are Cytoplasmic-facing. The disordered stretch occupies residues methionine 1–alanine 47. Over residues aspartate 15 to threonine 24 the composition is skewed to polar residues. The span at glycine 37–alanine 47 shows a compositional bias: gly residues. A helical membrane pass occupies residues glycine 39–glycine 59. The Lumenal portion of the chain corresponds to lysine 60–leucine 62. A helical transmembrane segment spans residues leucine 63–phenylalanine 83. Residues glycine 84 to serine 1104 lie on the Cytoplasmic side of the membrane. A coiled-coil region spans residues tryptophan 91–threonine 116. The 179-residue stretch at aspartate 135–valine 313 folds into the SMP-LTD domain. C2 domains follow at residues leucine 312–phenylalanine 433, glutamine 460–serine 580, serine 627–leucine 751, and leucine 777–serine 899. Serine 324 bears the Phosphoserine; by CDK5 mark. Ca(2+) contacts are provided by lysine 344, aspartate 345, aspartate 357, aspartate 404, aspartate 406, aspartate 408, aspartate 410, and aspartate 411. 3 disordered regions span residues valine 617 to serine 641, arginine 813 to lysine 833, and serine 924 to serine 950. The residue at position 817 (lysine 817) is an N6-acetyllysine. 2 positions are modified to phosphoserine: serine 820 and serine 941. Residues histidine 925 to histidine 946 show a composition bias toward low complexity. Threonine 948 carries the post-translational modification Phosphothreonine. 2 positions are modified to phosphoserine: serine 949 and serine 963. The C2 5 domain occupies proline 971 to tyrosine 1093. Tyrosine 1009 carries the phosphotyrosine modification. The tract at residues lysine 1018–lysine 1025 is required for phosphatidylinositol 4,5-bisphosphate-dependent location at the cell membrane. Serine 1034 carries the phosphoserine modification.

The protein belongs to the extended synaptotagmin family. In terms of assembly, interacts with ESYT2 and ESYT3. Interacts with ADGRD1; inhibiting the G-protein-coupled receptor activity of ADGRD1. Interaction with ADGRD1 is abolished when cytosolic calcium increases, relieving ADGRD1 G-protein-coupled receptor activity. Interacts (phosphorylated form) with SLC2A4. Phosphorylated on Ser residues in insulin-treated adipocytes (in vitro); this promotes interaction with SLC2A4.

The protein resides in the endoplasmic reticulum membrane. It localises to the cell membrane. Binds calcium (via the C2 domains) and translocates to sites of contact between the endoplasmic reticulum and the cell membrane in response to increased cytosolic calcium levels. Helps tether the endoplasmic reticulum to the cell membrane and promotes the formation of appositions between the endoplasmic reticulum and the cell membrane. Acts as an inhibitor of ADGRD1 G-protein-coupled receptor activity in absence of cytosolic calcium. Binds glycerophospholipids in a barrel-like domain and may play a role in cellular lipid transport. This Pongo abelii (Sumatran orangutan) protein is Extended synaptotagmin-1 (ESYT1).